Reading from the N-terminus, the 993-residue chain is Glycine dehydrogenase (decarboxylating) (993 aa).

Lys-715 carries the N6-(pyridoxal phosphate)lysine modification.

Belongs to the GcvP family. As to quaternary structure, the glycine cleavage system is composed of four proteins: P, T, L and H. It depends on pyridoxal 5'-phosphate as a cofactor.

It carries out the reaction N(6)-[(R)-lipoyl]-L-lysyl-[glycine-cleavage complex H protein] + glycine + H(+) = N(6)-[(R)-S(8)-aminomethyldihydrolipoyl]-L-lysyl-[glycine-cleavage complex H protein] + CO2. The glycine cleavage system catalyzes the degradation of glycine. The P protein binds the alpha-amino group of glycine through its pyridoxal phosphate cofactor; CO(2) is released and the remaining methylamine moiety is then transferred to the lipoamide cofactor of the H protein. The chain is Glycine dehydrogenase (decarboxylating) from Xylella fastidiosa (strain Temecula1 / ATCC 700964).